A 404-amino-acid polypeptide reads, in one-letter code: Argininosuccinate synthase (404 aa).

Residues 11 to 19 (AYSGGLDTS) and A40 each bind ATP. 2 residues coordinate L-citrulline: Y92 and S97. Residue G122 coordinates ATP. L-aspartate contacts are provided by T124, N128, and D129. Position 128 (N128) interacts with L-citrulline. R132, S181, S190, E266, and Y278 together coordinate L-citrulline.

This sequence belongs to the argininosuccinate synthase family. Type 1 subfamily. As to quaternary structure, homotetramer.

The protein localises to the cytoplasm. The enzyme catalyses L-citrulline + L-aspartate + ATP = 2-(N(omega)-L-arginino)succinate + AMP + diphosphate + H(+). It participates in amino-acid biosynthesis; L-arginine biosynthesis; L-arginine from L-ornithine and carbamoyl phosphate: step 2/3. This chain is Argininosuccinate synthase, found in Moritella abyssi.